Here is a 78-residue protein sequence, read N- to C-terminus: Small ribosomal subunit protein bS18 (78 aa).

This sequence belongs to the bacterial ribosomal protein bS18 family. As to quaternary structure, part of the 30S ribosomal subunit. Forms a tight heterodimer with protein bS6.

In terms of biological role, binds as a heterodimer with protein bS6 to the central domain of the 16S rRNA, where it helps stabilize the platform of the 30S subunit. The polypeptide is Small ribosomal subunit protein bS18 (Alkaliphilus oremlandii (strain OhILAs) (Clostridium oremlandii (strain OhILAs))).